The chain runs to 451 residues: Neuraminidase (451 aa).

Residues 1-6 (MNPNQK) are Intravirion-facing. Residues 7–29 (IITIGSMSLTIATVCFLMQIAIL) traverse the membrane as a helical segment. Residues 11–33 (GSMSLTIATVCFLMQIAILATNV) form an involved in apical transport and lipid raft association region. Topologically, residues 30-451 (ATNVTLHFRQ…DGANINFMPL (422 aa)) are virion surface. Residues asparagine 32, asparagine 48, and asparagine 66 are each glycosylated (N-linked (GlcNAc...) asparagine; by host). Positions 36-68 (HFRQNEESIPAYNQTTPCKPIIIERNIKYRNWS) are hypervariable stalk region. The tract at residues 71–451 (QCQITGFAPF…DGANINFMPL (381 aa)) is head of neuraminidase. Disulfide bonds link cysteine 72–cysteine 399, cysteine 104–cysteine 109, cysteine 163–cysteine 210, cysteine 212–cysteine 217, cysteine 258–cysteine 272, cysteine 260–cysteine 270, cysteine 300–cysteine 319, and cysteine 403–cysteine 429. Arginine 98 contacts substrate. N-linked (GlcNAc...) asparagine; by host glycans are attached at residues asparagine 123 and asparagine 126. Aspartate 131 functions as the Proton donor/acceptor in the catalytic mechanism. Position 132 (arginine 132) interacts with substrate. N-linked (GlcNAc...) asparagine; by host glycosylation is found at asparagine 180 and asparagine 214. 256–257 (EE) serves as a coordination point for substrate. Arginine 273 lines the substrate pocket. Ca(2+)-binding residues include aspartate 274, glycine 278, and aspartate 306. Residues 307 to 331 (TPRNDDSSSSSNCRDPNNERGNPGV) are disordered. Arginine 353 is a substrate binding site. Asparagine 384 carries an N-linked (GlcNAc...) asparagine; by host glycan. The active-site Nucleophile is the tyrosine 388.

It belongs to the glycosyl hydrolase 34 family. In terms of assembly, homotetramer. It depends on Ca(2+) as a cofactor. N-glycosylated.

Its subcellular location is the virion membrane. It localises to the host apical cell membrane. The catalysed reaction is Hydrolysis of alpha-(2-&gt;3)-, alpha-(2-&gt;6)-, alpha-(2-&gt;8)- glycosidic linkages of terminal sialic acid residues in oligosaccharides, glycoproteins, glycolipids, colominic acid and synthetic substrates.. Inhibited by the neuraminidase inhibitors zanamivir (Relenza) and oseltamivir (Tamiflu). These drugs interfere with the release of progeny virus from infected cells and are effective against all influenza strains. Resistance to neuraminidase inhibitors is quite rare. In terms of biological role, catalyzes the removal of terminal sialic acid residues from viral and cellular glycoconjugates. Cleaves off the terminal sialic acids on the glycosylated HA during virus budding to facilitate virus release. Additionally helps virus spread through the circulation by further removing sialic acids from the cell surface. These cleavages prevent self-aggregation and ensure the efficient spread of the progeny virus from cell to cell. Otherwise, infection would be limited to one round of replication. Described as a receptor-destroying enzyme because it cleaves a terminal sialic acid from the cellular receptors. May facilitate viral invasion of the upper airways by cleaving the sialic acid moieties on the mucin of the airway epithelial cells. Likely to plays a role in the budding process through its association with lipid rafts during intracellular transport. May additionally display a raft-association independent effect on budding. Plays a role in the determination of host range restriction on replication and virulence. Sialidase activity in late endosome/lysosome traffic seems to enhance virus replication. This Aves protein is Neuraminidase.